The primary structure comprises 359 residues: Phosphate acyltransferase (359 aa).

This sequence belongs to the PlsX family. In terms of assembly, homodimer. Probably interacts with PlsY.

The protein resides in the cytoplasm. It carries out the reaction a fatty acyl-[ACP] + phosphate = an acyl phosphate + holo-[ACP]. Its pathway is lipid metabolism; phospholipid metabolism. Catalyzes the reversible formation of acyl-phosphate (acyl-PO(4)) from acyl-[acyl-carrier-protein] (acyl-ACP). This enzyme utilizes acyl-ACP as fatty acyl donor, but not acyl-CoA. The sequence is that of Phosphate acyltransferase from Koribacter versatilis (strain Ellin345).